Consider the following 57-residue polypeptide: Protein translocase subunit SecE (57 aa).

The helical transmembrane segment at 34-54 (AGILLIGAIGFLVFLIMGGIV) threads the bilayer.

Belongs to the SecE/SEC61-gamma family. In terms of assembly, component of the Sec protein translocase complex. Heterotrimer consisting of SecY (alpha), SecG (beta) and SecE (gamma) subunits. The heterotrimers can form oligomers, although 1 heterotrimer is thought to be able to translocate proteins. Interacts with the ribosome. May interact with SecDF, and other proteins may be involved.

It is found in the cell membrane. Essential subunit of the Sec protein translocation channel SecYEG. Clamps together the 2 halves of SecY. May contact the channel plug during translocation. The protein is Protein translocase subunit SecE of Halobacterium salinarum (strain ATCC 29341 / DSM 671 / R1).